The sequence spans 106 residues: Large ribosomal subunit protein uL24 (106 aa).

The protein belongs to the universal ribosomal protein uL24 family. Part of the 50S ribosomal subunit.

Its function is as follows. One of two assembly initiator proteins, it binds directly to the 5'-end of the 23S rRNA, where it nucleates assembly of the 50S subunit. One of the proteins that surrounds the polypeptide exit tunnel on the outside of the subunit. The protein is Large ribosomal subunit protein uL24 of Desulforudis audaxviator (strain MP104C).